Here is a 191-residue protein sequence, read N- to C-terminus: Glutathione-dependent formaldehyde-activating enzyme (191 aa).

A CENP-V/GFA domain is found at 22–169 (FAGGTLQCLC…LTELGLTPYD (148 aa)). The Zn(2+) site is built by Cys29, Cys31, Cys50, Cys52, Cys55, Cys97, and Cys100.

This sequence belongs to the Gfa family. The cofactor is Zn(2+).

It carries out the reaction S-(hydroxymethyl)glutathione = glutathione + formaldehyde. Its pathway is one-carbon metabolism; formaldehyde degradation; formate from formaldehyde (glutathione route): step 1/3. In terms of biological role, catalyzes the condensation of formaldehyde and glutathione to S-hydroxymethylglutathione. The chain is Glutathione-dependent formaldehyde-activating enzyme from Xanthomonas campestris pv. campestris (strain 8004).